A 214-amino-acid polypeptide reads, in one-letter code: GTP-binding nuclear protein Ran (214 aa).

The Small GTPase Ran-type domain maps to 6–170 (YIPQYKLILV…LWLARRLSNQ (165 aa)). 17–24 (DGGVGKTT) provides a ligand contact to GTP. The segment at 36–44 (KKYIPTLGV) is switch-I. GTP contacts are provided by residues Gly-67, 121-124 (NKVD), and 149-151 (SAR). The switch-II stretch occupies residues 67–83 (GQEKFGGLRDGYYIKSD).

The protein belongs to the small GTPase superfamily. Ran family. Found in a nuclear export complex with RanGTP, exportin and pre-miRNA.

The protein localises to the nucleus. GTP-binding protein involved in nucleocytoplasmic transport. Required for the import of protein into the nucleus and also for RNA export. Involved in chromatin condensation and control of cell cycle. This Plasmodium falciparum protein is GTP-binding nuclear protein Ran.